Here is a 202-residue protein sequence, read N- to C-terminus: Small ribosomal subunit protein uS4c (202 aa).

In terms of domain architecture, S4 RNA-binding spans 90–153 (MRLDNIIFRL…KSEAIISKNI (64 aa)).

The protein belongs to the universal ribosomal protein uS4 family. As to quaternary structure, part of the 30S ribosomal subunit. Contacts protein S5. The interaction surface between S4 and S5 is involved in control of translational fidelity.

It localises to the plastid. The protein localises to the chloroplast. One of the primary rRNA binding proteins, it binds directly to 16S rRNA where it nucleates assembly of the body of the 30S subunit. Its function is as follows. With S5 and S12 plays an important role in translational accuracy. The chain is Small ribosomal subunit protein uS4c (rps4) from Hookeria lucens (Moss).